Reading from the N-terminus, the 546-residue chain is MPIANGDSLGCAMKADIQDYTKALEILEKEYTTRDGLDVDTLLDSDKHGALTYNDFLILPGYIGFPASDVTLDTPVTKRVSLKVPLLSSPMDTVTEHNMAIHMALLGGLGVIHHNCSPEDQAEMVRKVKRYENGFILDPVVLSPKATVGEAKALKAKWGFGGFPVTENGTLRSKLVGMVTSRDIQFHTNLDDPVTAIMSTDLVTAPAGTTLAEANDVLRSSKKGKLPIVDADGNLVSLLSRSDLMKNLHYPLASKLPDSKQLICAAAIGTREEDKHRLKLLVEAGLDIVVLDSSQGNSIYQIEMIKWVKKTFPEIDVIAGNVVTREQAAALIAAGADGLRIGMGSGSACITQEVMAVGRPQAVAVRSVASFAARFGVPCIADGGIQNVGHIVKGLAMGASTVMMGGLLAGTTESPGEYFVSNEGQLVKAYRGMGSIAAMEDKKAGAGSKDSKASNAGTARYFSEKDRVLVAQGVAGSVLDRGSVTKFVPYLVAGVQHSLQDIGVKSLDELHDGVNKGIVRFEMRSASAMAEGNVHGLHSYDKKLYS.

2 CBS domains span residues 135 to 197 and 198 to 254; these read FILD…VTAI and MSTD…PLAS. NAD(+)-binding positions include 292 to 294 and 342 to 344; these read DSS and GMG. Gly344 and Gly346 together coordinate K(+). An IMP-binding site is contributed by Ser347. A K(+)-binding site is contributed by Cys349. Residue Cys349 is the Thioimidate intermediate of the active site. Residues 382 to 384, 405 to 406, and 430 to 434 contribute to the IMP site; these read DGG, GG, and YRGMG. The Proton acceptor role is filled by Arg460. Position 472 (Gln472) interacts with IMP. K(+) contacts are provided by Glu531 and Gly532.

Belongs to the IMPDH/GMPR family. As to quaternary structure, homotetramer. K(+) serves as cofactor.

The protein resides in the cytoplasm. The enzyme catalyses IMP + NAD(+) + H2O = XMP + NADH + H(+). It functions in the pathway purine metabolism; XMP biosynthesis via de novo pathway; XMP from IMP: step 1/1. Its activity is regulated as follows. Mycophenolic acid (MPA) is a non-competitive inhibitor that prevents formation of the closed enzyme conformation by binding to the same site as the amobile flap. In contrast, mizoribine monophosphate (MZP) is a competitive inhibitor that induces the closed conformation. MPA is a potent inhibitor of mammalian IMPDHs but a poor inhibitor of the bacterial enzymes. MZP is a more potent inhibitor of bacterial IMPDH. Its function is as follows. Catalyzes the conversion of inosine 5'-phosphate (IMP) to xanthosine 5'-phosphate (XMP), the first committed and rate-limiting step in the de novo synthesis of guanine nucleotides, and therefore plays an important role in the regulation of cell growth. The sequence is that of Inosine-5'-monophosphate dehydrogenase from Aspergillus fumigatus (strain ATCC MYA-4609 / CBS 101355 / FGSC A1100 / Af293) (Neosartorya fumigata).